We begin with the raw amino-acid sequence, 132 residues long: Ribosome-binding factor A (132 aa).

It belongs to the RbfA family. As to quaternary structure, monomer. Binds 30S ribosomal subunits, but not 50S ribosomal subunits or 70S ribosomes.

It is found in the cytoplasm. Functionally, one of several proteins that assist in the late maturation steps of the functional core of the 30S ribosomal subunit. Associates with free 30S ribosomal subunits (but not with 30S subunits that are part of 70S ribosomes or polysomes). Required for efficient processing of 16S rRNA. May interact with the 5'-terminal helix region of 16S rRNA. The sequence is that of Ribosome-binding factor A from Prochlorococcus marinus subsp. pastoris (strain CCMP1986 / NIES-2087 / MED4).